Here is a 596-residue protein sequence, read N- to C-terminus: Clathrin heavy chain linker domain-containing protein 1 (596 aa).

A coiled-coil region spans residues 129 to 241; sequence QLEAKMRIIE…RDIAENLKKD (113 aa).

This chain is Clathrin heavy chain linker domain-containing protein 1 (Clhc1), found in Mus musculus (Mouse).